The primary structure comprises 1402 residues: DNA-directed RNA polymerase subunit beta' (1402 aa).

Zn(2+) contacts are provided by Cys-71, Cys-73, Cys-86, and Cys-89. Positions 462, 464, and 466 each coordinate Mg(2+). Cys-811, Cys-885, Cys-892, and Cys-895 together coordinate Zn(2+).

This sequence belongs to the RNA polymerase beta' chain family. The RNAP catalytic core consists of 2 alpha, 1 beta, 1 beta' and 1 omega subunit. When a sigma factor is associated with the core the holoenzyme is formed, which can initiate transcription. Mg(2+) serves as cofactor. The cofactor is Zn(2+).

The catalysed reaction is RNA(n) + a ribonucleoside 5'-triphosphate = RNA(n+1) + diphosphate. Its function is as follows. DNA-dependent RNA polymerase catalyzes the transcription of DNA into RNA using the four ribonucleoside triphosphates as substrates. The protein is DNA-directed RNA polymerase subunit beta' of Rhizobium johnstonii (strain DSM 114642 / LMG 32736 / 3841) (Rhizobium leguminosarum bv. viciae).